Reading from the N-terminus, the 307-residue chain is Putative lipid kinase SERP0390 (307 aa).

The DAGKc domain maps to 3–139 (QPYNHGVLFY…YDVLKVNDLY (137 aa)). ATP contacts are provided by residues S44, 74-80 (GDGTLNE), and T101. Mg(2+)-binding residues include S220, D223, and R225. The Proton acceptor role is filled by E281.

Belongs to the diacylglycerol/lipid kinase family. Requires Mg(2+) as cofactor.

In terms of biological role, may catalyze the ATP-dependent phosphorylation of lipids other than diacylglycerol (DAG). In Staphylococcus epidermidis (strain ATCC 35984 / DSM 28319 / BCRC 17069 / CCUG 31568 / BM 3577 / RP62A), this protein is Putative lipid kinase SERP0390.